The primary structure comprises 906 residues: Ectonucleotide pyrophosphatase/phosphodiesterase family member 1 (906 aa).

The segment at 1 to 25 (MERDGEQAGQGPRHGPAGNGRELES) is disordered. Residues 1-58 (MERDGEQAGQGPRHGPAGNGRELESPAAASLLAPMDLGEEPLEKAERARTAKDPNTYK) are Cytoplasmic-facing. A Phosphoserine modification is found at Ser-25. The Di-leucine motif motif lies at 27–34 (AAASLLAP). The helical; Signal-anchor for type II membrane protein transmembrane segment at 59 to 79 (VLSLVLSVCVLTTILGCIFGL) threads the bilayer. At 80-906 (KPSCAKEVKS…THLPIFSQED (827 aa)) the chain is on the extracellular side. 2 consecutive SMB domains span residues 86–126 (EVKS…VEPT) and 127–170 (HIWT…QEKK). Cystine bridges form between Cys-90–Cys-104, Cys-94–Cys-122, Cys-102–Cys-115, Cys-108–Cys-114, Cys-131–Cys-148, Cys-136–Cys-166, Cys-146–Cys-159, Cys-152–Cys-158, Cys-177–Cys-223, and Cys-185–Cys-397. Residue Asn-161 is glycosylated (N-linked (GlcNAc...) asparagine). The segment at 173-573 (VEEACETIDA…APNNESHGSL (401 aa)) is phosphodiesterase. 3 residues coordinate AMP: Asp-200, Thr-238, and Asn-259. Residues Asp-200 and Thr-238 each contribute to the Zn(2+) site. Thr-238 acts as the AMP-threonine intermediate in catalysis. 2 residues coordinate CMP: Thr-238 and Asn-259. Thr-238 and Asn-259 together coordinate dTMP. The GMP site is built by Thr-238 and Asn-259. Thr-238 is modified (phosphothreonine). Asn-267 is a glycosylation site (N-linked (GlcNAc...) asparagine). Leu-272, Lys-277, and Tyr-322 together coordinate GMP. Residues Lys-277 and Tyr-322 each coordinate AMP. CMP-binding residues include Lys-277 and Tyr-322. Residue Tyr-322 coordinates dTMP. An N-linked (GlcNAc...) asparagine glycan is attached at Asn-323. Residue Asp-358 coordinates AMP. Zn(2+) contacts are provided by Asp-358, His-362, Asp-405, and His-406. Asp-358 lines the CMP pocket. Asp-358 serves as a coordination point for dTMP. Asp-358 is a GMP binding site. His-362 is a 2',3'-cGAMP binding site. Residue His-406 coordinates AMP. Position 406 (His-406) interacts with CMP. A dTMP-binding site is contributed by His-406. GMP is bound at residue His-406. 6 disulfide bridges follow: Cys-413/Cys-512, Cys-462/Cys-849, Cys-596/Cys-653, Cys-607/Cys-707, Cys-609/Cys-692, and Cys-819/Cys-829. An N-linked (GlcNAc...) asparagine glycan is attached at Asn-459. Position 514 (Ser-514) interacts with 2',3'-cGAMP. His-517 is an AMP binding site. His-517 contributes to the Zn(2+) binding site. A CMP-binding site is contributed by His-517. His-517 is a dTMP binding site. His-517 serves as a coordination point for GMP. N-linked (GlcNAc...) asparagine glycosylation is found at Asn-567 and Asn-624. The linker stretch occupies residues 579–628 (KPIYTPSHPKEESFLSQCPIKSVSSDLGCTCDPSIVPIMDFEKQFNLTTD). Residues 635 to 906 (SMTVPNGRPR…THLPIFSQED (272 aa)) are nuclease-like domain. Residues Asp-781, Asp-783, Asp-785, Arg-787, and Asp-789 each coordinate Ca(2+).

This sequence belongs to the nucleotide pyrophosphatase/phosphodiesterase family. In terms of assembly, ectonucleotide pyrophosphatase/phosphodiesterase family member 1: Homodimer. Ectonucleotide pyrophosphatase/phosphodiesterase family member 1: Interacts with INSR; leading to inhibit INSR autophosphorylation and subsequent activation of INSR kinase activity. Ectonucleotide pyrophosphatase/phosphodiesterase family member 1, secreted form: Monomeric. The cofactor is Zn(2+). In terms of processing, the secreted form is produced through cleavage at Lys-85 by intracellular processing.

It is found in the cell membrane. The protein resides in the basolateral cell membrane. The protein localises to the secreted. The enzyme catalyses Hydrolytically removes 5'-nucleotides successively from the 3'-hydroxy termini of 3'-hydroxy-terminated oligonucleotides.. It catalyses the reaction a ribonucleoside 5'-triphosphate + H2O = a ribonucleoside 5'-phosphate + diphosphate + H(+). It carries out the reaction ATP + H2O = AMP + diphosphate + H(+). The catalysed reaction is UTP + H2O = UMP + diphosphate + H(+). The enzyme catalyses GTP + H2O = GMP + diphosphate + H(+). It catalyses the reaction CTP + H2O = CMP + diphosphate + H(+). It carries out the reaction 2',3'-cGAMP + 2 H2O = GMP + AMP + 2 H(+). The catalysed reaction is P(1),P(4)-bis(5'-adenosyl) tetraphosphate + H2O = AMP + ATP + 2 H(+). The enzyme catalyses 3',5'-cyclic AMP + H2O = AMP + H(+). With respect to regulation, at low concentrations of ATP, a phosphorylated intermediate is formed which inhibits further hydrolysis. In terms of biological role, nucleotide pyrophosphatase that generates diphosphate (PPi) and functions in bone mineralization and soft tissue calcification by regulating pyrophosphate levels. PPi inhibits bone mineralization and soft tissue calcification by binding to nascent hydroxyapatite crystals, thereby preventing further growth of these crystals. Preferentially hydrolyzes ATP, but can also hydrolyze other nucleoside 5' triphosphates such as GTP, CTP and UTP to their corresponding monophosphates with release of pyrophosphate, as well as diadenosine polyphosphates, and also 3',5'-cAMP to AMP. May also be involved in the regulation of the availability of nucleotide sugars in the endoplasmic reticulum and Golgi, and the regulation of purinergic signaling. Inhibits ectopic joint calcification and maintains articular chondrocytes by repressing hedgehog signaling; it is however unclear whether hedgehog inhibition is direct or indirect. Appears to modulate insulin sensitivity. Also involved in melanogenesis. Also able to hydrolyze 2',3'-cGAMP (cyclic GMP-AMP), a second messenger that activates TMEM173/STING and triggers type-I interferon production. 2',3'-cGAMP degradation takes place in the lumen or extracellular space, and not in the cytosol where it is produced; the role of 2',3'-cGAMP hydrolysis is therefore unclear. Not able to hydrolyze the 2',3'-cGAMP linkage isomer 3'-3'-cGAMP. This Rattus norvegicus (Rat) protein is Ectonucleotide pyrophosphatase/phosphodiesterase family member 1.